The primary structure comprises 175 residues: Large ribosomal subunit protein uL10 (175 aa).

This sequence belongs to the universal ribosomal protein uL10 family. As to quaternary structure, part of the ribosomal stalk of the 50S ribosomal subunit. The N-terminus interacts with L11 and the large rRNA to form the base of the stalk. The C-terminus forms an elongated spine to which L12 dimers bind in a sequential fashion forming a multimeric L10(L12)X complex.

Its function is as follows. Forms part of the ribosomal stalk, playing a central role in the interaction of the ribosome with GTP-bound translation factors. The protein is Large ribosomal subunit protein uL10 of Mycobacterium sp. (strain JLS).